Here is a 78-residue protein sequence, read N- to C-terminus: Acyl carrier protein (78 aa).

Positions Ser2 to Ala77 constitute a Carrier domain. Ser37 bears the O-(pantetheine 4'-phosphoryl)serine mark.

The protein belongs to the acyl carrier protein (ACP) family. 4'-phosphopantetheine is transferred from CoA to a specific serine of apo-ACP by AcpS. This modification is essential for activity because fatty acids are bound in thioester linkage to the sulfhydryl of the prosthetic group.

It is found in the cytoplasm. It functions in the pathway lipid metabolism; fatty acid biosynthesis. Functionally, carrier of the growing fatty acid chain in fatty acid biosynthesis. The polypeptide is Acyl carrier protein (Vibrio vulnificus (strain CMCP6)).